The chain runs to 572 residues: MNALMRRACCGALFPLSFRLAALSPMKGASNFSCGNVCASPAGCWAPPSGHDTGIKVYNSLTRRKDPLILADPTVATWYSCGPTVYDHAHLGHACSYVRFDIIRRILLKVFGIDTVVVMVVTDIDDKIIKRAKELNISPVALARTYEQDFKQDMTALKVLPPTVYMRVTENIPQIISFIEHIIANGYAYATSQGNVYFDVQSIGERYGKFNDSFSDTASESASQDKRHIRDFALWKTSKPEEPYWASPWGKGRPGWHIECSTIASSVFGKHLDIHTGGIDLAFPHHENEIAQCEAYHQSTQWGNYFLHTGHLHLKGNEEKMSKSLRNYLTVKEFLKSFSPDQFRMFCLRSKYKSAVEYSNGSMHDAVNTLHTISSFVDDAKAYMKGQLICQPVQEALLWQRLNETKVNVKAAFSDDFDTPRAVDAVMDLIHHGNRQLKAVSKESNSPRSSVVYGAMISYIEQFLEILGISLSQNQVAAEDRHSAVLFNVVEEMISFRSKVRNYALAADESPNAIGQEEKQQYKERRRQLLLEREPLLQACDIMRQHLAVYGINVKDRGNTSTWELLDRKEET.

Zn(2+) is bound at residue Cys81. Gly82 serves as a coordination point for L-cysteine. Residues 83-93 (PTVYDHAHLGH) carry the 'HIGH' region motif. Position 122 (Thr122) interacts with L-cysteine. The short motif at 127–130 (KIIK) is the 'KIIK' region element. Cys260, His285, and Glu289 together coordinate Zn(2+). His285 contributes to the L-cysteine binding site. The 'KMSKS' region motif lies at 320-324 (KMSKS). Residue Lys323 coordinates ATP.

This sequence belongs to the class-I aminoacyl-tRNA synthetase family. The cofactor is Zn(2+).

It is found in the mitochondrion. The catalysed reaction is tRNA(Cys) + L-cysteine + ATP = L-cysteinyl-tRNA(Cys) + AMP + diphosphate. The enzyme catalyses 2 L-cysteine = S-sulfanyl-L-cysteine + L-alanine. It catalyses the reaction S-sulfanyl-L-cysteine + L-cysteine = S-disulfanyl-L-cysteine + L-alanine. It carries out the reaction S-sulfanyl-L-cysteine + tRNA(Cys) + ATP = (S)-sulfanyl-L-cysteinyl-tRNA(Cys) + AMP + diphosphate. The catalysed reaction is S-disulfanyl-L-cysteine + tRNA(Cys) + ATP = (S)-disulfanyl-L-cysteinyl-tRNA(Cys) + AMP + diphosphate. Functionally, mitochondrial cysteine-specific aminoacyl-tRNA synthetase that catalyzes the ATP-dependent ligation of cysteine to tRNA(Cys). Its function is as follows. In addition to its role as an aminoacyl-tRNA synthetase, has also cysteine persulfide synthase activity. Produces reactive persulfide species such as cysteine persulfide (CysSSH) from substrate cysteine and mediate direct incorporation of CysSSH into proteins during translations, resulting in protein persulfides and polysulfides. CysSSHs behave as potent antioxidants and cellular protectants. In Xenopus tropicalis (Western clawed frog), this protein is Probable cysteine--tRNA ligase, mitochondrial (cars2).